The following is a 141-amino-acid chain: Large ribosomal subunit protein uL11 (141 aa).

Belongs to the universal ribosomal protein uL11 family. As to quaternary structure, part of the ribosomal stalk of the 50S ribosomal subunit. Interacts with L10 and the large rRNA to form the base of the stalk. L10 forms an elongated spine to which L12 dimers bind in a sequential fashion forming a multimeric L10(L12)X complex. In terms of processing, one or more lysine residues are methylated.

Its function is as follows. Forms part of the ribosomal stalk which helps the ribosome interact with GTP-bound translation factors. This Acetivibrio thermocellus (strain ATCC 27405 / DSM 1237 / JCM 9322 / NBRC 103400 / NCIMB 10682 / NRRL B-4536 / VPI 7372) (Clostridium thermocellum) protein is Large ribosomal subunit protein uL11.